The following is a 98-amino-acid chain: Large ribosomal subunit protein uL23 (98 aa).

Belongs to the universal ribosomal protein uL23 family. Part of the 50S ribosomal subunit. Contacts protein L29, and trigger factor when it is bound to the ribosome.

Its function is as follows. One of the early assembly proteins it binds 23S rRNA. One of the proteins that surrounds the polypeptide exit tunnel on the outside of the ribosome. Forms the main docking site for trigger factor binding to the ribosome. This chain is Large ribosomal subunit protein uL23, found in Rickettsia prowazekii (strain Madrid E).